Here is a 212-residue protein sequence, read N- to C-terminus: Uridine kinase (212 aa).

ATP is bound at residue 13-20 (GASASGKS).

It belongs to the uridine kinase family.

Its subcellular location is the cytoplasm. The enzyme catalyses uridine + ATP = UMP + ADP + H(+). It catalyses the reaction cytidine + ATP = CMP + ADP + H(+). It functions in the pathway pyrimidine metabolism; CTP biosynthesis via salvage pathway; CTP from cytidine: step 1/3. Its pathway is pyrimidine metabolism; UMP biosynthesis via salvage pathway; UMP from uridine: step 1/1. This Shewanella denitrificans (strain OS217 / ATCC BAA-1090 / DSM 15013) protein is Uridine kinase.